Here is a 488-residue protein sequence, read N- to C-terminus: Multidrug resistance outer membrane protein MdtP (488 aa).

A signal peptide spans 1 to 23 (MINRQLSRLLLCSILGSTTLISG). The N-palmitoyl cysteine moiety is linked to residue C24. C24 carries S-diacylglycerol cysteine lipidation.

This sequence belongs to the outer membrane factor (OMF) (TC 1.B.17) family. Could be part of a tripartite efflux system composed of MdtN, MdtO and MdtP.

The protein localises to the cell outer membrane. Could be involved in resistance to puromycin, acriflavine and tetraphenylarsonium chloride. The chain is Multidrug resistance outer membrane protein MdtP (mdtP) from Shigella flexneri.